The chain runs to 226 residues: UPF0758 protein CHY_0341 (226 aa).

Residues 104–226 (NFLNPDDVYN…YISMKAERLF (123 aa)) enclose the MPN domain. Residues His175, His177, and Asp188 each coordinate Zn(2+). The JAMM motif signature appears at 175 to 188 (HNHPSGDPTPSKED).

The protein belongs to the UPF0758 family.

The polypeptide is UPF0758 protein CHY_0341 (Carboxydothermus hydrogenoformans (strain ATCC BAA-161 / DSM 6008 / Z-2901)).